Consider the following 658-residue polypeptide: Aminopeptidase P1 (658 aa).

Positions 69 and 436 each coordinate a peptide. Residues D456, D467, and H530 each contribute to the Mn(2+) site. A peptide-binding residues include H530, H539, and E563. Mn(2+)-binding residues include E563 and E577.

This sequence belongs to the peptidase M24B family. In terms of assembly, homodimer. Interacts with N-1-naphthylphthalamic acid (NPA). Interacts with NBCL/BOP2/COCH around the plasma membrane and in the nucleus; this interaction disturbs its regulation of the nuclear transcription factor Y subunit (NF-YA1). Requires Mn(2+) as cofactor. Zn(2+) is required as a cofactor. Expressed at similar levels in shoot apical meristems (SAM), root meristems (RM), root apical meristems (RAM), roots and leaves and, to a slightly lesser degree, in root nodules.

The protein localises to the nucleus. Its subcellular location is the cytoplasm. It is found in the cell membrane. The protein resides in the microsome membrane. It catalyses the reaction Release of any N-terminal amino acid, including proline, that is linked to proline, even from a dipeptide or tripeptide.. Functionally, catalyzes the removal of a penultimate prolyl residue from the N-termini of peptides, such as Arg-Pro-Pro. Aminopeptidase that binds to the auxin transport inhibitor N-1-naphthylphthalamic acid (NPA). May play a negative role in the regulation of PIN auxin transport proteins. Involved in the coordination of the symbiotic nodule developmental program; prevents the formation of root nodules by regulating the expression of the nuclear transcription factor Y subunit (NF-YA1), a key nodulin. This Lotus japonicus (Lotus corniculatus var. japonicus) protein is Aminopeptidase P1.